The sequence spans 122 residues: Replication factor A protein 3 (122 aa).

It belongs to the replication factor A protein 3 family. In terms of assembly, component of the heterotrimeric canonical replication protein A complex (RPA). Post-translationally, the N-terminus is blocked.

It localises to the nucleus. As part of the replication protein A (RPA/RP-A), a single-stranded DNA-binding heterotrimeric complex, may play an essential role in DNA replication, recombination and repair. Binds and stabilizes single-stranded DNA intermediates, preventing complementary DNA reannealing and recruiting different proteins involved in DNA metabolism. Stimulates the activity of a cognate strand exchange protein (SEP1). This is Replication factor A protein 3 (RFA3) from Saccharomyces cerevisiae (strain ATCC 204508 / S288c) (Baker's yeast).